The sequence spans 252 residues: 3-dehydroquinate dehydratase (252 aa).

3-dehydroquinate contacts are provided by residues serine 21, 46-48 (EWR), and arginine 82. The Proton donor/acceptor role is filled by histidine 143. The active-site Schiff-base intermediate with substrate is lysine 170. 3-dehydroquinate is bound by residues arginine 213, serine 232, and glutamine 236.

Belongs to the type-I 3-dehydroquinase family. Dimer of dimers.

The catalysed reaction is 3-dehydroquinate = 3-dehydroshikimate + H2O. The protein operates within metabolic intermediate biosynthesis; chorismate biosynthesis; chorismate from D-erythrose 4-phosphate and phosphoenolpyruvate: step 3/7. Its activity is regulated as follows. Inhibited by (2R)-2-methyl-3-dehydroquinic acid. Functionally, involved in the third step of the chorismate pathway, which leads to the biosynthesis of aromatic amino acids. Catalyzes the cis-dehydration of 3-dehydroquinate (DHQ) and introduces the first double bond of the aromatic ring to yield 3-dehydroshikimate. The reaction involves the formation of an imine intermediate between the keto group of 3-dehydroquinate and the epsilon-amino group of Lys-170 at the active site. In Salmonella typhi, this protein is 3-dehydroquinate dehydratase.